A 211-amino-acid chain; its full sequence is Small ribosomal subunit protein uS4 (211 aa).

In terms of domain architecture, S4 RNA-binding spans 99 to 160 (RRLDSVVYQM…KSRNIQQVRE (62 aa)).

Belongs to the universal ribosomal protein uS4 family. Part of the 30S ribosomal subunit. Contacts protein S5. The interaction surface between S4 and S5 is involved in control of translational fidelity.

Its function is as follows. One of the primary rRNA binding proteins, it binds directly to 16S rRNA where it nucleates assembly of the body of the 30S subunit. Functionally, with S5 and S12 plays an important role in translational accuracy. The sequence is that of Small ribosomal subunit protein uS4 from Petrotoga mobilis (strain DSM 10674 / SJ95).